Consider the following 514-residue polypeptide: MRHHTKNLRRRAIFLRTTPRGNMDSSSSVATSTSSSSNHRLVRSSEGSPSAGGDDIEEVIMTPGIATGRVQPAVSVAIPDLFTQLPPVKDDLATSTSKTQDETVAICLPYLAGSDANADVEHNAHGVPHIDRKKHVRFLRNMLRQLPAPFIAADASRPWFLYWSLNAMAILGENVKEDYAESLADTARSMQNESGGFSGGHGQTSHLATTYAVVLALAVVGDEEGLSLIDRRALWKWLCDLKEADGGFRMSLGGEEDVRGAYCAAVIISLLNLPLDLCKDSEAYIRDPTANLFTGLGDYVRKCQTFEGGISGQPDAEAHGAYAFCALGCLSLLGTPSETIPKYLNIERLISWLSSRQYAPEGGFSGRTNKLVDGCYSHWVGGCWPLIEACLNGPVKVSSLDVEPQPLFSREGLMRYILCCCQEQGKRGGLRDKPGKPSDAYHSCYVLSGLSSAQNRWQLVVGDDDMPAWMVSPFPNEEEIFDEKDRVGTVHPVYVIPEDKVAKVQTFFASRDGF.

Basic residues predominate over residues 1–13; the sequence is MRHHTKNLRRRAI. The interval 1–56 is disordered; it reads MRHHTKNLRRRAIFLRTTPRGNMDSSSSVATSTSSSSNHRLVRSSEGSPSAGGDDI. The segment covering 25–39 has biased composition (low complexity); it reads SSSSVATSTSSSSNH. 5 PFTB repeats span residues 180–221, 231–272, 293–334, 346–388, and 410–454; these read AESL…AVVG, RRAL…SLLN, FTGL…SLLG, IERL…PLIE, and REGL…SSAQ. (2E,6E)-farnesyl diphosphate contacts are provided by residues 319 to 322 and 367 to 370; these read HGAY and RTNK. The Zn(2+) site is built by Asp-373 and Cys-375. 376–379 serves as a coordination point for (2E,6E)-farnesyl diphosphate; the sequence is YSHW. His-442 serves as a coordination point for Zn(2+).

It belongs to the protein prenyltransferase subunit beta family. Heterodimer of an alpha and a beta subunit. Interacts with RAS1 and RAS2. The cofactor is Zn(2+). Highly expressed in mycelium, conidium, conidial germination, early formed appressorium and the late infection hypha.

The protein resides in the cytoplasm. It catalyses the reaction L-cysteinyl-[protein] + (2E,6E)-farnesyl diphosphate = S-(2E,6E)-farnesyl-L-cysteinyl-[protein] + diphosphate. Functionally, catalyzes the transfer of a farnesyl moiety from farnesyl diphosphate to a cysteine at the fourth position from the C-terminus of several proteins having the C-terminal sequence Cys-aliphatic-aliphatic-X. The beta subunit is responsible for peptide-binding. The protein is Protein farnesyltransferase subunit beta (RAM1) of Pyricularia oryzae (strain 70-15 / ATCC MYA-4617 / FGSC 8958) (Rice blast fungus).